Consider the following 268-residue polypeptide: Tryptophan synthase alpha chain (268 aa).

Residues Glu-49 and Asp-60 each act as proton acceptor in the active site.

The protein belongs to the TrpA family. Tetramer of two alpha and two beta chains.

It carries out the reaction (1S,2R)-1-C-(indol-3-yl)glycerol 3-phosphate + L-serine = D-glyceraldehyde 3-phosphate + L-tryptophan + H2O. It functions in the pathway amino-acid biosynthesis; L-tryptophan biosynthesis; L-tryptophan from chorismate: step 5/5. In terms of biological role, the alpha subunit is responsible for the aldol cleavage of indoleglycerol phosphate to indole and glyceraldehyde 3-phosphate. This is Tryptophan synthase alpha chain from Xanthomonas euvesicatoria pv. vesicatoria (strain 85-10) (Xanthomonas campestris pv. vesicatoria).